The following is an 83-amino-acid chain: Small ribosomal subunit protein bS16 (83 aa).

The protein belongs to the bacterial ribosomal protein bS16 family.

This chain is Small ribosomal subunit protein bS16, found in Shewanella denitrificans (strain OS217 / ATCC BAA-1090 / DSM 15013).